Here is a 221-residue protein sequence, read N- to C-terminus: Putative adhesin P1-like protein MPN_131 (221 aa).

Low complexity predominate over residues 13–36 (RYGNNHRGSNSSTSGVTTQGQSQN). Disordered regions lie at residues 13-51 (RYGNNHRGSNSSTSGVTTQGQSQNASSNEPAPTFSNVGV) and 90-183 (GWRN…TPSG). The segment covering 37-48 (ASSNEPAPTFSN) has biased composition (polar residues). A compositionally biased stretch (basic and acidic residues) spans 130–139 (LKQDKADKSG). Polar residues-rich tracts occupy residues 149–160 (SGDNLTNYTNLP) and 174–183 (HSPTRTTPSG).

It belongs to the adhesin P1 family.

The protein is Putative adhesin P1-like protein MPN_131 of Mycoplasma pneumoniae (strain ATCC 29342 / M129 / Subtype 1) (Mycoplasmoides pneumoniae).